Consider the following 195-residue polypeptide: Inosine triphosphate pyrophosphatase (195 aa).

An ITP-binding site is contributed by 13-18 (TGNAKK). A Mg(2+)-binding site is contributed by glutamate 43. Residues lysine 55, 71-72 (DT), lysine 88, 148-151 (FGWD), lysine 171, and 176-177 (HR) contribute to the ITP site.

The protein belongs to the HAM1 NTPase family. Homodimer. It depends on Mg(2+) as a cofactor. Mn(2+) serves as cofactor.

The protein localises to the cytoplasm. It carries out the reaction ITP + H2O = IMP + diphosphate + H(+). The enzyme catalyses dITP + H2O = dIMP + diphosphate + H(+). The catalysed reaction is XTP + H2O = XMP + diphosphate + H(+). It catalyses the reaction N(6)-hydroxy-dATP + H2O = N(6)-hydroxy-dAMP + diphosphate + H(+). Functionally, pyrophosphatase that hydrolyzes the non-canonical purine nucleotides inosine triphosphate (ITP), deoxyinosine triphosphate (dITP) as well as 2'-deoxy-N-6-hydroxylaminopurine triphosphate (dHAPTP) and xanthosine 5'-triphosphate (XTP) to their respective monophosphate derivatives. The enzyme does not distinguish between the deoxy- and ribose forms. Probably excludes non-canonical purines from RNA and DNA precursor pools, thus preventing their incorporation into RNA and DNA and avoiding chromosomal lesions. The sequence is that of Inosine triphosphate pyrophosphatase (itpa) from Xenopus laevis (African clawed frog).